The chain runs to 1460 residues: DNA-binding protein RFX7 (1460 aa).

Residues 1-34 form a disordered region; that stretch reads MAEEQQQPPPQQPDAHQQLPPSAPNSGVALPALV. A DNA-binding region (RFX-type winged-helix) is located at residues 108–183; it reads AFSWIRNTLE…YCYSGLRKKA (76 aa). Positions 188–193 match the PxLPxI/L motif; mediates interaction with ANKRA2 and RFXANK motif; the sequence is PTLPNL. A disordered region spans residues 308-352; that stretch reads QRKIQKKQQEQKLQSPLPGESAAKKSESATSNGVTNLPNGNPSIL. Ser322 carries the post-translational modification Phosphoserine. A compositionally biased stretch (polar residues) spans 337–352; it reads TSNGVTNLPNGNPSIL. Ser379 carries the post-translational modification Phosphoserine. Over residues 404–416 the composition is skewed to polar residues; that stretch reads SVKQAPKTPQNVP. The tract at residues 404-428 is disordered; it reads SVKQAPKTPQNVPASPGGDRSARHR. Residues Ser418 and Ser455 each carry the phosphoserine modification. Polar residues predominate over residues 481-513; that stretch reads TPSNSNTPLKHSASVSSATGTTEESRSVPQIKN. Disordered stretches follow at residues 481–585, 632–715, and 917–1015; these read TPSN…PSNE, TFTS…AQIP, and QSVT…SVPP. Positions 515–535 are enriched in low complexity; that stretch reads SVVSLQSPGSRSSSAGGTSAV. The span at 537–549 shows a compositional bias: basic and acidic residues; that stretch reads VKVEPETSSDEHP. 2 stretches are compositionally biased toward polar residues: residues 563 to 583 and 632 to 644; these read QTPS…QKPS and TFTS…NGDS. Thr564 carries the phosphothreonine modification. Phosphoserine is present on Ser662. Lys704 is modified (N6-acetyllysine). Polar residues-rich tracts occupy residues 705-715 and 917-933; these read TEGSTAGAQIP and QSVT…SSTH. Residues 947-963 are compositionally biased toward pro residues; the sequence is TPTPTPTPTPTPTPTPT. The segment covering 971 to 1009 has biased composition (polar residues); sequence GSQSLSRESPCSRLAQTTPVDSALGSSRHTPIGTPHSNC. Thr988 is modified (phosphothreonine). Phosphoserine is present on residues Ser1178 and Ser1329.

This sequence belongs to the RFX family. In terms of assembly, interacts (via PxLPxI/L motif) with RFXANK (via ankyrin repeats). Interacts (via PxLPxI/L motif) with ANKRA2 (via ankyrin repeats). As to expression, widely expressed in many different tissue types including thymus and placenta, with high expression in brain. Expressed in both inhibitory and excitatory neurons in cortex.

Its subcellular location is the nucleus. Transcription factor. Acts as a transcriptional activator by binding to promoter regions of target genes, such as PDCD4, PIK3IP1, MXD4, PNRC1, and RFX5. Plays a role in natural killer (NK) cell maintenance and immunity. May play a role in the process of ciliogenesis in the neural tube and neural tube closure. This chain is DNA-binding protein RFX7, found in Homo sapiens (Human).